The primary structure comprises 252 residues: Pantothenate synthetase (252 aa).

29-36 (MGNLHAGH) is an ATP binding site. Histidine 36 serves as the catalytic Proton donor. Glutamine 60 provides a ligand contact to (R)-pantoate. A beta-alanine-binding site is contributed by glutamine 60. Residue 146–149 (GEKD) participates in ATP binding. Residue glutamine 152 participates in (R)-pantoate binding. Residues valine 175 and 183–186 (CSSR) contribute to the ATP site.

The protein belongs to the pantothenate synthetase family. As to quaternary structure, homodimer.

It is found in the cytoplasm. The enzyme catalyses (R)-pantoate + beta-alanine + ATP = (R)-pantothenate + AMP + diphosphate + H(+). Its pathway is cofactor biosynthesis; (R)-pantothenate biosynthesis; (R)-pantothenate from (R)-pantoate and beta-alanine: step 1/1. Catalyzes the condensation of pantoate with beta-alanine in an ATP-dependent reaction via a pantoyl-adenylate intermediate. This is Pantothenate synthetase from Legionella pneumophila (strain Corby).